Here is a 213-residue protein sequence, read N- to C-terminus: Uridine kinase (213 aa).

Position 15–22 (15–22 (GASASGKS)) interacts with ATP.

Belongs to the uridine kinase family.

The protein resides in the cytoplasm. The enzyme catalyses uridine + ATP = UMP + ADP + H(+). It carries out the reaction cytidine + ATP = CMP + ADP + H(+). Its pathway is pyrimidine metabolism; CTP biosynthesis via salvage pathway; CTP from cytidine: step 1/3. The protein operates within pyrimidine metabolism; UMP biosynthesis via salvage pathway; UMP from uridine: step 1/1. The protein is Uridine kinase of Yersinia enterocolitica serotype O:8 / biotype 1B (strain NCTC 13174 / 8081).